The sequence spans 676 residues: RNA helicase NPH-II (676 aa).

One can recognise a Helicase ATP-binding domain in the interval 172–347 (FSAWISHRPV…VFLPNPAFIH (176 aa)). 185–192 (GGTGVGKT) is a binding site for ATP. A DEXH box motif is present at residues 296–299 (DEVH). The Helicase C-terminal domain maps to 366–535 (NPSSRMAYIE…NYILYANKFN (170 aa)).

The protein belongs to the DEAD box helicase family. DEAH subfamily. Monomer.

Its subcellular location is the virion. The catalysed reaction is ATP + H2O = ADP + phosphate + H(+). Functionally, NTP-dependent helicase that catalyzes unidirectional unwinding of 3'tailed duplex RNAs and plays an important role during transcription of early mRNAs, presumably by preventing R-loop formation behind the elongating RNA polymerase. Might also play a role in the export of newly synthesized mRNA chains out of the core into the cytoplasm. Required for replication and propagation of viral particles. The protein is RNA helicase NPH-II (OPG084) of Vaccinia virus (strain Ankara) (VACV).